The primary structure comprises 233 residues: Ribosomal RNA small subunit methyltransferase G (233 aa).

Residues G91, M96, 142–143 (VE), and R157 contribute to the S-adenosyl-L-methionine site.

This sequence belongs to the methyltransferase superfamily. RNA methyltransferase RsmG family.

Its subcellular location is the cytoplasm. The enzyme catalyses guanosine(527) in 16S rRNA + S-adenosyl-L-methionine = N(7)-methylguanosine(527) in 16S rRNA + S-adenosyl-L-homocysteine. In terms of biological role, specifically methylates the N7 position of guanine in position 527 of 16S rRNA. In Cupriavidus necator (strain ATCC 17699 / DSM 428 / KCTC 22496 / NCIMB 10442 / H16 / Stanier 337) (Ralstonia eutropha), this protein is Ribosomal RNA small subunit methyltransferase G.